We begin with the raw amino-acid sequence, 271 residues long: uncharacterized protein (271 aa).

A DOD-type homing endonuclease domain is found at 77–205; sequence IIGVYFGDAN…SKELLKKLDV (129 aa).

This is an uncharacterized protein from Methanocaldococcus jannaschii (strain ATCC 43067 / DSM 2661 / JAL-1 / JCM 10045 / NBRC 100440) (Methanococcus jannaschii).